The sequence spans 187 residues: MTQLKNPVLMATIGAAQGLRGEVRVKSFTDDPTALGDYGNLHSEDGRVFEVLEIREAKNVVVVRFRGVNDRTAAEALNGLELFIERDNLPDDDLDEDEFFYADLEGMEAVDRTGKSYGSVTGVFDFGAGDLLELKGPGLRPVLIPFTEWSVLEIDLEAGKLVIDPTAAGLVDDEKSGPGKPFPTKRK.

Positions 96–169 constitute a PRC barrel domain; it reads EDEFFYADLE…KLVIDPTAAG (74 aa).

It belongs to the RimM family. As to quaternary structure, binds ribosomal protein uS19.

It is found in the cytoplasm. Functionally, an accessory protein needed during the final step in the assembly of 30S ribosomal subunit, possibly for assembly of the head region. Essential for efficient processing of 16S rRNA. May be needed both before and after RbfA during the maturation of 16S rRNA. It has affinity for free ribosomal 30S subunits but not for 70S ribosomes. This Sinorhizobium medicae (strain WSM419) (Ensifer medicae) protein is Ribosome maturation factor RimM.